Reading from the N-terminus, the 387-residue chain is Gamma-butyrobetaine dioxygenase (387 aa).

Residues Cys-38, Cys-40, Cys-43, and His-82 each coordinate Zn(2+). His-202, Asp-204, and His-347 together coordinate Fe cation. At Ser-351 the chain carries Phosphoserine.

It belongs to the gamma-BBH/TMLD family. Fe(2+) is required as a cofactor. It depends on L-ascorbate as a cofactor. As to expression, expressed in the liver and in some extend in the testis and the epididymis.

It is found in the cytoplasm. It catalyses the reaction 4-(trimethylamino)butanoate + 2-oxoglutarate + O2 = carnitine + succinate + CO2. It functions in the pathway amine and polyamine biosynthesis; carnitine biosynthesis. Catalyzes the formation of L-carnitine from gamma-butyrobetaine. The protein is Gamma-butyrobetaine dioxygenase (Bbox1) of Rattus norvegicus (Rat).